The sequence spans 225 residues: Chalcone--flavanone isomerase 3 (225 aa).

Substrate contacts are provided by threonine 51, asparagine 116, and threonine 193.

Belongs to the chalcone isomerase family.

The enzyme catalyses a chalcone = a flavanone.. The protein operates within secondary metabolite biosynthesis; flavonoid biosynthesis. Functionally, catalyzes the intramolecular cyclization of bicyclic chalcones into tricyclic (S)-flavanones. Responsible for the isomerization of 4,2',4',6'-tetrahydroxychalcone (also termed chalcone) into naringenin. In Lotus japonicus (Lotus corniculatus var. japonicus), this protein is Chalcone--flavanone isomerase 3 (CHI3).